The primary structure comprises 445 residues: Methylenetetrahydrofolate--tRNA-(uracil-5-)-methyltransferase TrmFO (445 aa).

Gly8 to Gly13 serves as a coordination point for FAD.

Belongs to the MnmG family. TrmFO subfamily. Requires FAD as cofactor.

The protein resides in the cytoplasm. It catalyses the reaction uridine(54) in tRNA + (6R)-5,10-methylene-5,6,7,8-tetrahydrofolate + NADH + H(+) = 5-methyluridine(54) in tRNA + (6S)-5,6,7,8-tetrahydrofolate + NAD(+). The catalysed reaction is uridine(54) in tRNA + (6R)-5,10-methylene-5,6,7,8-tetrahydrofolate + NADPH + H(+) = 5-methyluridine(54) in tRNA + (6S)-5,6,7,8-tetrahydrofolate + NADP(+). Its function is as follows. Catalyzes the folate-dependent formation of 5-methyl-uridine at position 54 (M-5-U54) in all tRNAs. This chain is Methylenetetrahydrofolate--tRNA-(uracil-5-)-methyltransferase TrmFO, found in Rhodobacter capsulatus (strain ATCC BAA-309 / NBRC 16581 / SB1003).